Reading from the N-terminus, the 277-residue chain is Large ribosomal subunit protein uL2 (277 aa).

Disordered stretches follow at residues 1 to 20 (MGIR…SVSD), 27 to 55 (TQPE…RHRG), and 207 to 277 (KAGR…RNQS). Residues 27–48 (TQPEKSLTTYKHSSQGRNNRGV) are compositionally biased toward polar residues. 2 stretches are compositionally biased toward basic residues: residues 207–220 (KAGR…RPHV) and 259–277 (TRNR…RNQS).

It belongs to the universal ribosomal protein uL2 family. In terms of assembly, part of the 50S ribosomal subunit. Forms a bridge to the 30S subunit in the 70S ribosome.

Its function is as follows. One of the primary rRNA binding proteins. Required for association of the 30S and 50S subunits to form the 70S ribosome, for tRNA binding and peptide bond formation. It has been suggested to have peptidyltransferase activity; this is somewhat controversial. Makes several contacts with the 16S rRNA in the 70S ribosome. The chain is Large ribosomal subunit protein uL2 from Gloeothece citriformis (strain PCC 7424) (Cyanothece sp. (strain PCC 7424)).